A 233-amino-acid chain; its full sequence is Cytidylate kinase (233 aa).

An ATP-binding site is contributed by 15-23 (GPSGAGKSS).

This sequence belongs to the cytidylate kinase family. Type 1 subfamily.

It is found in the cytoplasm. It carries out the reaction CMP + ATP = CDP + ADP. The enzyme catalyses dCMP + ATP = dCDP + ADP. In Citrifermentans bemidjiense (strain ATCC BAA-1014 / DSM 16622 / JCM 12645 / Bem) (Geobacter bemidjiensis), this protein is Cytidylate kinase.